The chain runs to 196 residues: MIPVVIEQTSRGERSYDIYSRLLKDRIIMLTGPVEDNMANSVIAQLLFLDAQDNTKDIYLYVNTPGGSVSAGLAIVDTMNFIKADVQTIVMGMAASMGTVIASSGAKGKRFMLPNAEYMIHQPMGGTGGGTQQTDMAIAAEHLLKTRHRLEKILAQNAGKTIKQIHKDAERDYWMSAEETLAYGFIDEIMENNELA.

The active-site Nucleophile is the Ser-96. The active site involves His-121.

This sequence belongs to the peptidase S14 family. Fourteen ClpP subunits assemble into 2 heptameric rings which stack back to back to give a disk-like structure with a central cavity, resembling the structure of eukaryotic proteasomes.

Its subcellular location is the cytoplasm. The catalysed reaction is Hydrolysis of proteins to small peptides in the presence of ATP and magnesium. alpha-casein is the usual test substrate. In the absence of ATP, only oligopeptides shorter than five residues are hydrolyzed (such as succinyl-Leu-Tyr-|-NHMec, and Leu-Tyr-Leu-|-Tyr-Trp, in which cleavage of the -Tyr-|-Leu- and -Tyr-|-Trp bonds also occurs).. Functionally, cleaves peptides in various proteins in a process that requires ATP hydrolysis. Has a chymotrypsin-like activity. Plays a major role in the degradation of misfolded proteins. This chain is ATP-dependent Clp protease proteolytic subunit, found in Streptococcus equi subsp. zooepidemicus (strain H70).